A 214-amino-acid chain; its full sequence is Galactokinase (214 aa).

R47, D53, H54, and D56 together coordinate alpha-D-galactose. ATP-binding residues include G149, G151, S153, and S154. D199 provides a ligand contact to alpha-D-galactose. Catalysis depends on D199, which acts as the Proton acceptor.

The protein belongs to the GHMP kinase family. GalK subfamily.

It catalyses the reaction alpha-D-galactose + ATP = alpha-D-galactose 1-phosphate + ADP + H(+). Its pathway is carbohydrate metabolism; galactose metabolism. Galactokinase is a key enzyme in the galactose metabolism where it catalyzes the conversion of alpha-D-galactose to galactose 1-phosphate. Can also induce the transcription of the gal genes in response to the organism being challenged with galactose as the sole source of carbon. This Candida maltosa (Yeast) protein is Galactokinase.